Reading from the N-terminus, the 195-residue chain is dITP/XTP pyrophosphatase (195 aa).

9–14 (TGNKGK) serves as a coordination point for substrate. Positions 41 and 70 each coordinate Mg(2+). The Proton acceptor role is filled by Asp-70. Residues Ser-71, 155–158 (FGYD), Lys-178, and 183–184 (HR) contribute to the substrate site.

It belongs to the HAM1 NTPase family. In terms of assembly, homodimer. It depends on Mg(2+) as a cofactor.

The catalysed reaction is XTP + H2O = XMP + diphosphate + H(+). The enzyme catalyses dITP + H2O = dIMP + diphosphate + H(+). It catalyses the reaction ITP + H2O = IMP + diphosphate + H(+). Its function is as follows. Pyrophosphatase that catalyzes the hydrolysis of nucleoside triphosphates to their monophosphate derivatives, with a high preference for the non-canonical purine nucleotides XTP (xanthosine triphosphate), dITP (deoxyinosine triphosphate) and ITP. Seems to function as a house-cleaning enzyme that removes non-canonical purine nucleotides from the nucleotide pool, thus preventing their incorporation into DNA/RNA and avoiding chromosomal lesions. This is dITP/XTP pyrophosphatase from Haemophilus influenzae (strain ATCC 51907 / DSM 11121 / KW20 / Rd).